We begin with the raw amino-acid sequence, 61 residues long: Photosystem II reaction center X protein (61 aa).

The helical transmembrane segment at 26–46 (IGSFIAAALLIVIPATAFLIF) threads the bilayer.

It belongs to the PsbX family. Type 2 subfamily. As to quaternary structure, PSII consists of a core antenna complex that captures photons, and an electron transfer chain that converts photonic excitation into a charge separation. PSII forms dimeric complexes.

It localises to the cellular thylakoid membrane. Its function is as follows. Involved in the binding and/or turnover of quinones at the Q(B) site of Photosystem II. The sequence is that of Photosystem II reaction center X protein from Prochlorococcus marinus (strain MIT 9301).